The primary structure comprises 123 residues: Small ribosomal subunit protein uS12 (123 aa).

Residues 1-25 form a disordered region; sequence MPTINQLVRKPRKSRSALNKAPALQ. Aspartate 90 carries the 3-methylthioaspartic acid modification.

The protein belongs to the universal ribosomal protein uS12 family. In terms of assembly, part of the 30S ribosomal subunit. Contacts proteins S8 and S17. May interact with IF1 in the 30S initiation complex.

Its function is as follows. With S4 and S5 plays an important role in translational accuracy. Interacts with and stabilizes bases of the 16S rRNA that are involved in tRNA selection in the A site and with the mRNA backbone. Located at the interface of the 30S and 50S subunits, it traverses the body of the 30S subunit contacting proteins on the other side and probably holding the rRNA structure together. The combined cluster of proteins S8, S12 and S17 appears to hold together the shoulder and platform of the 30S subunit. This is Small ribosomal subunit protein uS12 from Ehrlichia canis (strain Jake).